Reading from the N-terminus, the 955-residue chain is Glycine dehydrogenase (decarboxylating) (955 aa).

N6-(pyridoxal phosphate)lysine is present on Lys702.

The protein belongs to the GcvP family. As to quaternary structure, the glycine cleavage system is composed of four proteins: P, T, L and H. It depends on pyridoxal 5'-phosphate as a cofactor.

The catalysed reaction is N(6)-[(R)-lipoyl]-L-lysyl-[glycine-cleavage complex H protein] + glycine + H(+) = N(6)-[(R)-S(8)-aminomethyldihydrolipoyl]-L-lysyl-[glycine-cleavage complex H protein] + CO2. In terms of biological role, the glycine cleavage system catalyzes the degradation of glycine. The P protein binds the alpha-amino group of glycine through its pyridoxal phosphate cofactor; CO(2) is released and the remaining methylamine moiety is then transferred to the lipoamide cofactor of the H protein. This is Glycine dehydrogenase (decarboxylating) from Bradyrhizobium diazoefficiens (strain JCM 10833 / BCRC 13528 / IAM 13628 / NBRC 14792 / USDA 110).